Here is a 221-residue protein sequence, read N- to C-terminus: Glutathione peroxidase (221 aa).

The N-terminal stretch at 1–19 (MFIQLLILSYAILLQLIAT) is a signal peptide. An N-linked (GlcNAc...) asparagine glycan is attached at Asn28. Cys72 is an active-site residue. Asn87 and Asn90 each carry an N-linked (GlcNAc...) asparagine glycan.

Belongs to the glutathione peroxidase family. As to quaternary structure, homotetramer.

It localises to the secreted. Its subcellular location is the extracellular space. The enzyme catalyses 2 glutathione + H2O2 = glutathione disulfide + 2 H2O. The polypeptide is Glutathione peroxidase (Dirofilaria immitis (Canine heartworm)).